A 1693-amino-acid polypeptide reads, in one-letter code: Latrophilin Cirl (1693 aa).

Residues 1 to 774 lie on the Extracellular side of the membrane; that stretch reads MVLQGAKQRL…LFTMFDGNMR (774 aa). Residues 30 to 119 form the SUEL-type lectin domain; the sequence is ACEGKKLTIE…KYLEAHYQCV (90 aa). N-linked (GlcNAc...) asparagine glycans are attached at residues asparagine 147, asparagine 260, asparagine 306, and asparagine 345. Residues 190–309 form a disordered region; the sequence is PPATHATPPG…GPSVSSNGSA (120 aa). Polar residues-rich tracts occupy residues 259–269 and 287–309; these read SNATAPSNTRI and KSSPNRTPGTAASGPSVSSNGSA. Residues 379–406 are disordered; sequence SFDEDDEEMAGTSTTTPMSTSGDCLHNS. Positions 390 to 399 are enriched in low complexity; sequence TSTTTPMSTS. 4 N-linked (GlcNAc...) asparagine glycosylation sites follow: asparagine 405, asparagine 662, asparagine 710, and asparagine 737. Positions 568–761 constitute a GAIN-B domain; it reads RSVVQKVKNI…AILMDVVDEH (194 aa). 2 disulfide bridges follow: cysteine 716–cysteine 743 and cysteine 731–cysteine 745. Residues 716 to 761 form a GPS region; sequence CVFWNYIDHAWSANGCSLESTNRTHSVCSCNHLTNFAILMDVVDEH. Residues 775-795 traverse the membrane as a helical segment; sequence IFIYISIAICVVFIVIALLTL. Residues 796–808 lie on the Cytoplasmic side of the membrane; that stretch reads KLFNGVFVKSART. The helical transmembrane segment at 809-829 threads the bilayer; that stretch reads SIYINIYICLLAIELLFLLGI. Topologically, residues 830–835 are extracellular; that stretch reads EQTETS. A helical transmembrane segment spans residues 836–856; the sequence is IFCGFITVFLHCAILSGTSWF. Residues 857-882 are Cytoplasmic-facing; that stretch reads CYEAFHSYSTLTSDELLLEVDQTPKV. The chain crosses the membrane as a helical span at residues 883 to 903; the sequence is NCYYLLSYGLSLSVVAISLVI. Over 904 to 927 the chain is Extracellular; it reads NPSTYTQNDYCVLMEANAVFYATF. The helical transmembrane segment at 928 to 948 threads the bilayer; sequence VAPVLIFFMAAIGYTFLSWII. Residues 949–975 lie on the Cytoplasmic side of the membrane; the sequence is MCRKSRTGLKTKEHTRLATVRFDIRCS. Residues 976-996 form a helical membrane-spanning segment; sequence FVFFLLLSAVWCSAYFYLRGA. Topologically, residues 997–1003 are extracellular; it reads KMDEDVT. Residues 1004–1024 traverse the membrane as a helical segment; the sequence is GIYGYNFICFNTLLGLYIFVF. Over 1025–1693 the chain is Cytoplasmic; the sequence is HCIQNEKIRR…VRCYLEPLAK (669 aa). Positions 1089–1109 are disordered; it reads PLGTNDDAHDEQQQQQHMSAT. A phosphoserine mark is found at serine 1165, serine 1256, and serine 1263. Disordered regions lie at residues 1237–1264, 1279–1362, 1450–1529, and 1596–1678; these read KPNSQHGKKKRGGVGAIPASPSGSLHSR, KTKP…APPP, SRYG…LPPQ, and SMRG…SAML. Residues 1307 to 1323 are compositionally biased toward low complexity; sequence QQQQQLRQQRQQQQQQL. A phosphoserine mark is found at serine 1324 and serine 1325. Low complexity predominate over residues 1337–1357; sequence LHLQHQQQQQQQRRAGGQQQL. The segment covering 1464-1475 has biased composition (polar residues); it reads RNQQQQQHSLAQ. 2 stretches are compositionally biased toward acidic residues: residues 1485 to 1498 and 1508 to 1521; these read DEDDDEDEDDEETT and CDEEEEDEESDMED. Positions 1640–1663 are enriched in low complexity; that stretch reads QQLQKLSPQSTTSSSSHTSHSNPH.

It belongs to the G-protein coupled receptor 2 family. LN-TM7 subfamily. As to quaternary structure, forms a heterodimer, consisting of a large extracellular region non-covalently linked to a seven-transmembrane moiety. Proteolytically cleaved into 2 subunits, an extracellular subunit and a seven-transmembrane subunit.

Its subcellular location is the cell membrane. In Drosophila pseudoobscura pseudoobscura (Fruit fly), this protein is Latrophilin Cirl.